A 201-amino-acid chain; its full sequence is Large ribosomal subunit protein uL4 (201 aa).

Residues 44 to 68 (RAQKSRADVSGSGRKPWRQKGTGRA) are disordered.

The protein belongs to the universal ribosomal protein uL4 family. In terms of assembly, part of the 50S ribosomal subunit.

Its function is as follows. One of the primary rRNA binding proteins, this protein initially binds near the 5'-end of the 23S rRNA. It is important during the early stages of 50S assembly. It makes multiple contacts with different domains of the 23S rRNA in the assembled 50S subunit and ribosome. Forms part of the polypeptide exit tunnel. The sequence is that of Large ribosomal subunit protein uL4 from Buchnera aphidicola subsp. Schizaphis graminum (strain Sg).